The chain runs to 626 residues: Carnitine O-acetyltransferase (626 aa).

K93 carries the post-translational modification N6-succinyllysine. K261 carries the post-translational modification N6-acetyllysine; alternate. The residue at position 261 (K261) is an N6-succinyllysine; alternate. Residue K268 is modified to N6-acetyllysine. The active-site Proton acceptor is the H343. CoA is bound by residues K419 and K423–D430. Residues Y452 and S454 each contribute to the (R)-carnitine site. Residue S456 coordinates CoA. T465 is a (R)-carnitine binding site. CoA is bound by residues R504 and Q555. A Microbody targeting signal motif is present at residues A624–L626.

This sequence belongs to the carnitine/choline acetyltransferase family. In terms of assembly, monomer.

It localises to the endoplasmic reticulum. The protein resides in the peroxisome. It is found in the mitochondrion inner membrane. The catalysed reaction is (R)-carnitine + acetyl-CoA = O-acetyl-(R)-carnitine + CoA. The enzyme catalyses propanoyl-CoA + (R)-carnitine = O-propanoyl-(R)-carnitine + CoA. It catalyses the reaction butanoyl-CoA + (R)-carnitine = O-butanoyl-(R)-carnitine + CoA. It carries out the reaction hexanoyl-CoA + (R)-carnitine = O-hexanoyl-(R)-carnitine + CoA. The catalysed reaction is octanoyl-CoA + (R)-carnitine = O-octanoyl-(R)-carnitine + CoA. The enzyme catalyses decanoyl-CoA + (R)-carnitine = O-decanoyl-(R)-carnitine + CoA. It catalyses the reaction 3-methylbutanoyl-CoA + (R)-carnitine = O-3-methylbutanoyl-(R)-carnitine + CoA. It carries out the reaction 2-methylpropanoyl-CoA + (R)-carnitine = O-isobutanoyl-(R)-carnitine + CoA. The catalysed reaction is 2-methylbutanoyl-CoA + (R)-carnitine = O-2-methylbutanoyl-(R)-carnitine + CoA. The enzyme catalyses acetoacetyl-CoA + (R)-carnitine = O-3-oxobutanoyl-(R)-carnitine + CoA. It catalyses the reaction 3-hydroxybutanoyl-CoA + (R)-carnitine = O-3-hydroxybutanoyl-(R)-carnitine + CoA. It carries out the reaction 4,8-dimethylnonanoyl-CoA + (R)-carnitine = O-4,8-dimethylnonanoyl-(R)-carnitine + CoA. The catalysed reaction is 2,6-dimethylheptanoyl-CoA + (R)-carnitine = O-2,6-dimethylheptanoyl-(R)-carnitine + CoA. Catalyzes the reversible transfer of acyl groups from carnitine to coenzyme A (CoA) and regulates the acyl-CoA/CoA ratio. Also plays a crucial role in the transport of fatty acids for beta-oxidation. Responsible for the synthesis of short- and branched-chain acylcarnitines. Active towards some branched-chain amino acid oxidation pathway (BCAAO) intermediates. Trans-2-enoyl-CoAs and 2-methylacyl-CoAs are poor substrates. This Mus musculus (Mouse) protein is Carnitine O-acetyltransferase.